Consider the following 242-residue polypeptide: TGACG-sequence-specific DNA-binding protein TGA-1B (242 aa).

The tract at residues 1-125 is disordered; that stretch reads EFCDFSGNQA…HSSPNFENNS (125 aa). The segment covering 18 to 45 has biased composition (polar residues); it reads DTSSPELRQSSSGSDVLNATSSTSSHQV. A compositionally biased stretch (basic and acidic residues) spans 66-79; the sequence is EGSRESANDNKGLG. The segment covering 88-125 has biased composition (polar residues); it reads SPESQGSGNYGSNVSEGLNYPSDSNKSVHSSPNFENNS. Residues 183–242 form the bZIP domain; the sequence is DEKKRARLVRNRESAQLSRQRKKHYVEELEDKVRIMHSTIQDLNAKVAYIIAENATLKTQ. Residues 185-216 form a basic motif region; the sequence is KKRARLVRNRESAQLSRQRKKHYVEELEDKVR. The tract at residues 225-239 is leucine-zipper; that stretch reads LNAKVAYIIAENATL.

This sequence belongs to the bZIP family.

The protein resides in the nucleus. In terms of biological role, binds specifically to the DNA sequence 5'-TGACG-3'. This is TGACG-sequence-specific DNA-binding protein TGA-1B (TGA1B) from Nicotiana tabacum (Common tobacco).